The primary structure comprises 187 residues: UPF0301 protein YqgE (187 aa).

This sequence belongs to the UPF0301 (AlgH) family.

The polypeptide is UPF0301 protein YqgE (Shigella boydii serotype 4 (strain Sb227)).